Reading from the N-terminus, the 408-residue chain is AREKVGIIGYTTKETPVLSNPGPYLEFRDEVEELQIHANKLTTLGVNKIIALGHSGFFEDQRIARKVKGVDVVVGGHTNTFLYTGSPPSTEVPAGNYPFMVQSDDGRQVPVVQAYAFGKYLGYLNVVFNDKGNVIKASGNPILLNKDIPEDQVVKAQVNKMKIQLQNYYSQEIGKTIVYLNGTTQACRFHECNLGNLICDAVIYNNLRHPDDNEWNHVSMCIVNGGGIRSPIDERANNGIITLEELTSVLPFGGTFDLLQIKGSALKQAFEHSVHRHGQGTGELLQVSGIKVVYDLSQKPGSRVVSLNVLCTKCRVPTYVPLEMEKTYKVLLPSFLATGGDGYHMLKGDSSNHNSGDLDISIVGDYIKRMEKVFPAVEGRVTFLDGTLFQAQLFLTWGLCISLLFFIL.

Residues His-54 and His-77 each coordinate Zn(2+). Asn-167 and Asn-181 each carry an N-linked (GlcNAc...) asparagine glycan. Cystine bridges form between Cys-187–Cys-192 and Cys-199–Cys-221. Arg-188 is an AMP binding site. Asn-224, Arg-229, and Phe-252 together coordinate AMP. Residues Cys-311 and Cys-314 are joined by a disulfide bond. Phe-335 and Asp-341 together coordinate AMP. Propeptides (removed in mature form) lie at residues 385-388 and 385-408; these read DGTL and DGTL…FFIL.

This sequence belongs to the 5'-nucleotidase family. Homodimer. Post-translationally, venom 5'-nucleotidases (or a part thereof) may be released into the venom via exosome-like vesicles. They may be attached via a GPI anchor to the membrane of these vesicles. Soluble forms of 5'-nucleotidase might be released by cleavage of the ectodomain in the exosome-like vesicles or venom gland cells. Expressed by the venom gland.

The protein localises to the membrane. It catalyses the reaction a ribonucleoside 5'-phosphate + H2O = a ribonucleoside + phosphate. It carries out the reaction AMP + H2O = adenosine + phosphate. The catalysed reaction is GMP + H2O = guanosine + phosphate. The enzyme catalyses ADP + H2O = AMP + phosphate + H(+). With respect to regulation, is potently inhibited by metal ions Fe(3+), Cu(2+) and Zn(2+). Is enhanced by Mn(2+). Ca(2+) and Mg(2+) have no effect. Its function is as follows. Hydrolyzes nucleotides into nucleosides. Prefers AMP as the substrate but also cleaves GMP and ADP. Does not affect AMP, cAMP and cGMP. Inhibits ADP- and collagen-induced platelet aggregation. Snake venom 5'-nucleotidases are widely distributed among venomous snake taxa, but there is a lack of information about their biological activities. They have been shown to inhibit platelet aggregation. This effect may be due to the liberation of inhibitory AMP or adenosine by its action on ADP released upon initiation of aggregation. Venom 5'-nucleotidases are also known to synergistically act in vivo with other toxins like ADPases, phospholipases, and disintegrins to exert a more pronounced anti-coagulant effect. This is Snake venom 5'-nucleotidase from Macrovipera lebetinus (Levantine viper).